The following is a 355-amino-acid chain: Peptide chain release factor 1 (355 aa).

Q233 bears the N5-methylglutamine mark. Basic and acidic residues predominate over residues 280–293; it reads ERRKKEQERADSRR. The disordered stretch occupies residues 280-306; sequence ERRKKEQERADSRRGQVGSGNRSERIR.

This sequence belongs to the prokaryotic/mitochondrial release factor family. Post-translationally, methylated by PrmC. Methylation increases the termination efficiency of RF1.

It localises to the cytoplasm. In terms of biological role, peptide chain release factor 1 directs the termination of translation in response to the peptide chain termination codons UAG and UAA. The protein is Peptide chain release factor 1 of Rickettsia africae (strain ESF-5).